Consider the following 196-residue polypeptide: Carnitine operon protein CaiE (196 aa).

A disordered region spans residues 173–196 (TQPLRQMEENRPRLQGTTDVTPKR). The span at 187 to 196 (QGTTDVTPKR) shows a compositional bias: polar residues.

The protein belongs to the transferase hexapeptide repeat family.

The protein operates within amine and polyamine metabolism; carnitine metabolism. In terms of biological role, overproduction of CaiE stimulates the activity of CaiB and CaiD. The polypeptide is Carnitine operon protein CaiE (Escherichia coli O6:K15:H31 (strain 536 / UPEC)).